The sequence spans 380 residues: Transcription factor RF2a (380 aa).

Positions 1 to 57 (MNREKSPIPGDGGDGLPPQATRRAGPPAAAAAAEYDISRMPDFPTRNPGHRRAHSEI) are disordered. The segment covering 16–33 (LPPQATRRAGPPAAAAAA) has biased composition (low complexity). An activation of RTBV promoter region spans residues 56-108 (EILSLPEDLDLCAAGGGDGPSLSDENDEELFSMFLDVEKLNSTCGASSEAEAE). In terms of domain architecture, bZIP spans 181 to 244 (DPKRAKRIWA…SGLTTENSEL (64 aa)). Residues 183–204 (KRAKRIWANRQSAARSKERKMR) form a basic motif region. The leucine-zipper stretch occupies residues 209 to 244 (LERKVQTLQTEATTLSAQLALLQRDTSGLTTENSEL). The segment at 283–357 (GGMMMNFGGM…AQQLQQAARD (75 aa)) is interaction with TBP2. The segment covering 326 to 355 (QAQQQQVLHPQHQQQQPLHPLQAQQLQQAA) has biased composition (low complexity). The disordered stretch occupies residues 326–380 (QAQQQQVLHPQHQQQQPLHPLQAQQLQQAARDLKMKSPMGGQSQWGDGKSGSSGN).

This sequence belongs to the bZIP family. As to quaternary structure, binds DNA as a homodimer or as a heterodimer with RF2b. The heterodimer binds stronger to DNA than the homodimer. Interacts with TBP2. In terms of tissue distribution, expressed at high levels in levels in leaf sheath, moderate levels in leaf blade, but not in roots. Predominantly expressed in vascular tissues.

The protein localises to the nucleus. Its function is as follows. Transcription factor probably involved in vascular development and shoot tissue organization. Binds to the DNA sequence 5'-CCGAGTGTGCCCCTGG-3' present in the promoter region Box II of the phloem-specific rice tungro bacilliform virus (RTBV) promoter. May regulate tissue-specific expression of the RTBV promoter and virus replication. The polypeptide is Transcription factor RF2a (RF2a) (Oryza sativa subsp. japonica (Rice)).